We begin with the raw amino-acid sequence, 398 residues long: Phosphoglycerate kinase (398 aa).

Substrate contacts are provided by residues 23-25 (DFN), R38, 61-64 (HMGK), R122, and R155. Residues K206, G297, E328, and 354 to 357 (GGDS) contribute to the ATP site.

Belongs to the phosphoglycerate kinase family. In terms of assembly, monomer.

Its subcellular location is the cytoplasm. The enzyme catalyses (2R)-3-phosphoglycerate + ATP = (2R)-3-phospho-glyceroyl phosphate + ADP. The protein operates within carbohydrate degradation; glycolysis; pyruvate from D-glyceraldehyde 3-phosphate: step 2/5. The sequence is that of Phosphoglycerate kinase from Clostridium botulinum (strain Okra / Type B1).